We begin with the raw amino-acid sequence, 300 residues long: Ribosomal protein L11 methyltransferase (300 aa).

The S-adenosyl-L-methionine site is built by Thr-147, Gly-168, Asp-190, and Asn-236.

It belongs to the methyltransferase superfamily. PrmA family.

It is found in the cytoplasm. It carries out the reaction L-lysyl-[protein] + 3 S-adenosyl-L-methionine = N(6),N(6),N(6)-trimethyl-L-lysyl-[protein] + 3 S-adenosyl-L-homocysteine + 3 H(+). In terms of biological role, methylates ribosomal protein L11. The sequence is that of Ribosomal protein L11 methyltransferase from Leptospira interrogans serogroup Icterohaemorrhagiae serovar Lai (strain 56601).